A 133-amino-acid chain; its full sequence is Small ribosomal subunit protein bS6 (133 aa).

It belongs to the bacterial ribosomal protein bS6 family.

Its function is as follows. Binds together with bS18 to 16S ribosomal RNA. The protein is Small ribosomal subunit protein bS6 of Chlorobium limicola (strain DSM 245 / NBRC 103803 / 6330).